The sequence spans 360 residues: Protein Wnt-2 (360 aa).

Positions Met-1 to Ser-26 are cleaved as a signal peptide. Disulfide bonds link Cys-76/Cys-87, Cys-127/Cys-135, Cys-137/Cys-157, Cys-206/Cys-220, Cys-208/Cys-215, Cys-278/Cys-309, Cys-294/Cys-304, Cys-308/Cys-348, Cys-324/Cys-339, Cys-326/Cys-336, and Cys-331/Cys-332. Ser-212 is lipidated: O-palmitoleoyl serine; by PORCN. N-linked (GlcNAc...) asparagine glycosylation is present at Asn-295.

Belongs to the Wnt family. Palmitoleoylation is required for efficient binding to frizzled receptors. Depalmitoleoylation leads to Wnt signaling pathway inhibition.

It localises to the secreted. The protein localises to the extracellular space. Its subcellular location is the extracellular matrix. In terms of biological role, ligand for members of the frizzled family of seven transmembrane receptors. Probable developmental protein. May be a signaling molecule which affects the development of discrete regions of tissues. Is likely to signal over only few cell diameters. In Eulemur macaco macaco (Black lemur), this protein is Protein Wnt-2 (WNT2).